We begin with the raw amino-acid sequence, 178 residues long: uncharacterized protein (178 aa).

It to E.coli YrdD.

This is an uncharacterized protein from Haemophilus influenzae (strain ATCC 51907 / DSM 11121 / KW20 / Rd).